A 514-amino-acid polypeptide reads, in one-letter code: 2,3-bisphosphoglycerate-independent phosphoglycerate mutase (514 aa).

Mn(2+) contacts are provided by aspartate 14 and serine 64. Serine 64 functions as the Phosphoserine intermediate in the catalytic mechanism. Substrate-binding positions include histidine 125, 155–156, arginine 187, arginine 193, 263–266, and lysine 336; these read RD and RADR. Aspartate 403, histidine 407, aspartate 444, histidine 445, and histidine 463 together coordinate Mn(2+).

This sequence belongs to the BPG-independent phosphoglycerate mutase family. In terms of assembly, monomer. Mn(2+) serves as cofactor.

It carries out the reaction (2R)-2-phosphoglycerate = (2R)-3-phosphoglycerate. It participates in carbohydrate degradation; glycolysis; pyruvate from D-glyceraldehyde 3-phosphate: step 3/5. Its function is as follows. Catalyzes the interconversion of 2-phosphoglycerate and 3-phosphoglycerate. In Shewanella sp. (strain ANA-3), this protein is 2,3-bisphosphoglycerate-independent phosphoglycerate mutase.